Here is a 163-residue protein sequence, read N- to C-terminus: uncharacterized protein (163 aa).

This is an uncharacterized protein from Schizosaccharomyces pombe (strain 972 / ATCC 24843) (Fission yeast).